The sequence spans 198 residues: MIALLTGQIAQKSPDHIILDVNGVGYRVQIPFSTYYDLPEEGTVSLHIHTSVREDAIQLYGFRTSLEKSFFQLLLSVSGVGPRLARDILSNIQPAQLAQALGQGDIRMLSAVPGIGKKTAERLVLELKEKVGKLDLSSVVVPEPRQMPEDDLLEDVVSALLNLGYKEPQVRKVLAGLNPGSDASLEGVLKQALKSLMR.

The tract at residues 1-63 (MIALLTGQIA…EDAIQLYGFR (63 aa)) is domain I. Residues 64-142 (TSLEKSFFQL…KLDLSSVVVP (79 aa)) form a domain II region. The interval 143 to 153 (EPRQMPEDDLL) is flexible linker. Positions 153 to 198 (LEDVVSALLNLGYKEPQVRKVLAGLNPGSDASLEGVLKQALKSLMR) are domain III.

It belongs to the RuvA family. Homotetramer. Forms an RuvA(8)-RuvB(12)-Holliday junction (HJ) complex. HJ DNA is sandwiched between 2 RuvA tetramers; dsDNA enters through RuvA and exits via RuvB. An RuvB hexamer assembles on each DNA strand where it exits the tetramer. Each RuvB hexamer is contacted by two RuvA subunits (via domain III) on 2 adjacent RuvB subunits; this complex drives branch migration. In the full resolvosome a probable DNA-RuvA(4)-RuvB(12)-RuvC(2) complex forms which resolves the HJ.

It is found in the cytoplasm. Functionally, the RuvA-RuvB-RuvC complex processes Holliday junction (HJ) DNA during genetic recombination and DNA repair, while the RuvA-RuvB complex plays an important role in the rescue of blocked DNA replication forks via replication fork reversal (RFR). RuvA specifically binds to HJ cruciform DNA, conferring on it an open structure. The RuvB hexamer acts as an ATP-dependent pump, pulling dsDNA into and through the RuvAB complex. HJ branch migration allows RuvC to scan DNA until it finds its consensus sequence, where it cleaves and resolves the cruciform DNA. The polypeptide is Holliday junction branch migration complex subunit RuvA (Pelobacter propionicus (strain DSM 2379 / NBRC 103807 / OttBd1)).